We begin with the raw amino-acid sequence, 1061 residues long: E3 SUMO-protein ligase ZNF451 (1061 aa).

A disordered region spans residues 1–38 (MGDPGSEIIESVPPAGPEASESTTDENEDDIQFVSEGP). Residues 1–246 (MGDPGSEIIE…TDDGHNNNLL (246 aa)) are sufficient for E3 SUMO-protein ligase activity. The segment at 1-344 (MGDPGSEIIE…RVHCRNAGPV (344 aa)) is important for interaction with SUMO1 and SUMO2. The interaction with SUMO2 1 stretch occupies residues 30–37 (DIQFVSEG). A PLRP motif is present at residues 38-41 (PLRP). The tract at residues 42 to 50 (VLEYIDLVS) is interaction with SUMO2 2. Residues Lys-75, Lys-77, Lys-106, Ile-121, Ala-130, Leu-138, Lys-139, Lys-144, and Lys-153 each participate in a glycyl lysine isopeptide (Lys-Gly) (interchain with G-Cter in SUMO2) cross-link. The residue at position 155 (Ser-155) is a Phosphoserine. Arg-158 carries the post-translational modification Omega-N-methylarginine. Residues Val-164 and Lys-167 each participate in a glycyl lysine isopeptide (Lys-Gly) (interchain with G-Cter in SUMO2) cross-link. The tract at residues 168 to 525 (PILCPIMHCN…HMSRIHGGAH (358 aa)) is important for interaction with SMAD4. The C2H2-type 1 zinc-finger motif lies at 169–195 (ILCPIMHCNKEFDNGHLLLGHLKRFDH). Residues Gln-226, Gly-240, Pro-247, Ser-263, Lys-270, Lys-275, Lys-283, Asp-286, Lys-288, Pro-293, Lys-301, and Lys-309 each participate in a glycyl lysine isopeptide (Lys-Gly) (interchain with G-Cter in SUMO2) cross-link. A C2H2-type 2 zinc finger spans residues 253–277 (FACPNCFLLFSRKEECSKHMSGKNH). The segment at 315–337 (VKCVACHKTLRSHMELTAHFRVH) adopts a C2H2-type 3 zinc-finger fold. Residue Lys-357 forms a Glycyl lysine isopeptide (Lys-Gly) (interchain with G-Cter in SUMO2) linkage. The C2H2-type 4 zinc finger occupies 362–386 (GYCPDCNQVFVDETSTQNHKQNSGH). Lys-423 is covalently cross-linked (Glycyl lysine isopeptide (Lys-Gly) (interchain with G-Cter in SUMO2)). At Ser-432 the chain carries Phosphoserine. Glycyl lysine isopeptide (Lys-Gly) (interchain with G-Cter in SUMO2) cross-links involve residues Lys-434, Lys-446, Lys-452, Lys-454, Lys-464, Phe-473, Val-490, Cys-500, Lys-505, Asp-508, Gly-522, Trp-532, Lys-543, and Lys-585. A C2H2-type 5 zinc finger spans residues 498 to 521 (YKCVVCGKVCDDSGVIRLHMSRIH). The C2H2-type 6 zinc finger occupies 531–554 (FWCRTCKKELTRKDTIMAHVTEFH). The C2H2-type 7; atypical zinc finger occupies 606–631 (WQCRICEDMFDSQEYVKQHCMSLASH). Residues Lys-632, Lys-647, and Lys-664 each participate in a glycyl lysine isopeptide (Lys-Gly) (interchain with G-Cter in SUMO2) cross-link. The segment at 636-659 (YSCAHCRKPFHKIETLYRHCQDEH) adopts a C2H2-type 8 zinc-finger fold. The C2H2-type 9 zinc-finger motif lies at 667–690 (YFCGLCDLIFNVEEAFLSHYEEHH). A Glycyl lysine isopeptide (Lys-Gly) (interchain with G-Cter in SUMO1); alternate cross-link involves residue Lys-706. Lys-706 participates in a covalent cross-link: Glycyl lysine isopeptide (Lys-Gly) (interchain with G-Cter in SUMO2); alternate. Residues Lys-731 and Lys-748 each participate in a glycyl lysine isopeptide (Lys-Gly) (interchain with G-Cter in SUMO2) cross-link. Residues 753-776 (FRCSLCSATAQNLTDMNTHIHQVH) form a C2H2-type 10 zinc finger. Glycyl lysine isopeptide (Lys-Gly) (interchain with G-Cter in SUMO2) cross-links involve residues Lys-777, Lys-779, Lys-790, Lys-817, Lys-827, Lys-832, Lys-843, Lys-845, Lys-852, Lys-951, Lys-992, and Lys-993. The C2H2-type 11 zinc finger occupies 789 to 812 (IKCGTCTKAFHDPESAQQHFHRKH). An important for ubiquitin binding region spans residues 1050–1061 (LEEAIRRSLEEM).

The protein belongs to the krueppel C2H2-type zinc-finger protein family. Homooligomer. Interacts (via N-terminal region) with SUMO1. Interacts (via N-terminal region) with SUMO2. Interacts simultaneously with two SUMO2 chains. Identified in a complex with SUMO2 and UBE2I/UBC9, where one ZNF451 interacts with one UBE2I/UBC9 and two SUMO2 chains, one bound to the UBE2I/UBC9 active site and the other to another region of the same UBE2I/UBC9 molecule. Interacts (via C-terminus) with ubiquitin. Interacts (via N-terminal zinc-finger domains) with SMAD4 (via MH2 domain). Interacts with SMAD2 and SMAD3. Identified in a complex that contains at least ZNF451, SMAD2, SMAD3 and SMAD4. Interacts with EP300. Inhibits interaction between EP300 and the SMAD4 complex. Interacts with SIMC1. In terms of processing, sumoylated. Predominantly sumoylated on the N-terminal region that is important for interaction with SUMO1 and SUMO2. Sumoylation is important for localization in nuclear granules; desumoylation leads to diffuse nucleoplasmic location. Autosumoylated (in vitro). Sumoylation enhances E3 SUMO-protein ligase activity.

Its subcellular location is the nucleus. The protein localises to the PML body. The protein resides in the nucleoplasm. It participates in protein modification; protein sumoylation. Its function is as follows. E3 SUMO-protein ligase; has a preference for SUMO2 and SUMO3 and facilitates UBE2I/UBC9-mediated sumoylation of target proteins. Plays a role in protein SUMO2 modification in response to stress caused by DNA damage and by proteasome inhibitors (in vitro). Required for MCM4 sumoylation. Has no activity with SUMO1. Preferentially transfers an additional SUMO2 chain onto the SUMO2 consensus site 'Lys-11'. Negatively regulates transcriptional activation mediated by the SMAD4 complex in response to TGF-beta signaling. Inhibits EP300-mediated acetylation of histone H3 at 'Lys-9'. Plays a role in regulating the transcription of AR targets. The sequence is that of E3 SUMO-protein ligase ZNF451 (ZNF451) from Homo sapiens (Human).